Consider the following 113-residue polypeptide: CRISPR-associated endoribonuclease Cas2 (113 aa).

Residue Asp-33 coordinates Mg(2+).

This sequence belongs to the CRISPR-associated endoribonuclease Cas2 protein family. As to quaternary structure, homodimer, forms a heterotetramer with a Cas1 homodimer. Mg(2+) serves as cofactor.

In terms of biological role, CRISPR (clustered regularly interspaced short palindromic repeat), is an adaptive immune system that provides protection against mobile genetic elements (viruses, transposable elements and conjugative plasmids). CRISPR clusters contain sequences complementary to antecedent mobile elements and target invading nucleic acids. CRISPR clusters are transcribed and processed into CRISPR RNA (crRNA). Functions as a ssRNA-specific endoribonuclease. Involved in the integration of spacer DNA into the CRISPR cassette. The type III-A Csm effector complex binds crRNA and acts as a crRNA-guided RNase, DNase and cyclic oligoadenylate synthase; binding of target RNA cognate to the crRNA is required for all activities. This chain is CRISPR-associated endoribonuclease Cas2, found in Mycobacterium tuberculosis (strain CDC 1551 / Oshkosh).